Consider the following 440-residue polypeptide: Gap junction alpha-8 protein (440 aa).

An intramembrane segment occupies Gly-2–Glu-12. At Glu-13 to Ile-21 the chain is on the cytoplasmic side. A helical membrane pass occupies residues Gly-22–Glu-42. The Extracellular portion of the chain corresponds to Phe-43 to Pro-71. 3 disulfides stabilise this stretch: Cys-54/Cys-201, Cys-61/Cys-195, and Cys-65/Cys-190. Residues Ile-72–Tyr-92 form a helical membrane-spanning segment. The Cytoplasmic segment spans residues Val-93 to His-161. A disordered region spans residues Glu-108–Gly-144. Residues Ile-162–Phe-182 traverse the membrane as a helical segment. Residues Arg-183–Thr-210 are Extracellular-facing. Residues Ile-211–Met-231 traverse the membrane as a helical segment. The Cytoplasmic segment spans residues Ser-232–Val-440. The disordered stretch occupies residues Gly-334–Val-440. 2 stretches are compositionally biased toward basic and acidic residues: residues Val-353–Thr-365 and Glu-375–Pro-405. Residues Leu-423 to Arg-432 are compositionally biased toward low complexity.

It belongs to the connexin family. Alpha-type (group II) subfamily. In terms of assembly, a hemichannel or connexon is composed of a hexamer of connexins. A functional gap junction is formed by the apposition of two hemichannels. Forms heteromeric channels with GJA3. Detected in eye lens (at protein level). Eye lens.

It localises to the cell membrane. The protein localises to the cell junction. The protein resides in the gap junction. Structural component of eye lens gap junctions. Gap junctions are dodecameric channels that connect the cytoplasm of adjoining cells. They are formed by the docking of two hexameric hemichannels, one from each cell membrane. Small molecules and ions diffuse from one cell to a neighboring cell via the central pore. The protein is Gap junction alpha-8 protein (GJA8) of Ovis aries (Sheep).